The sequence spans 163 residues: Photosystem II extrinsic protein V (163 aa).

An N-terminal signal peptide occupies residues 1–26 (MFRRLIGVVVATALLTFQLIVGSATA). Residues cysteine 63, cysteine 66, histidine 67, and histidine 118 each coordinate heme c.

The protein belongs to the cytochrome c family. PsbV subfamily. PSII is composed of 1 copy each of membrane proteins PsbA, PsbB, PsbC, PsbD, PsbE, PsbF, PsbH, PsbI, PsbJ, PsbK, PsbL, PsbM, PsbT, PsbX, PsbY, PsbZ, Psb30/Ycf12, peripheral proteins PsbO, CyanoQ (PsbQ), PsbU, PsbV and a large number of cofactors. It forms dimeric complexes. It depends on heme c as a cofactor.

It is found in the cellular thylakoid membrane. Its function is as follows. One of the extrinsic, lumenal subunits of photosystem II (PSII). PSII is a light-driven water plastoquinone oxidoreductase, using light energy to abstract electrons from H(2)O, generating a proton gradient subsequently used for ATP formation. The extrinsic proteins stabilize the structure of photosystem II oxygen-evolving complex (OEC), the ion environment of oxygen evolution and protect the OEC against heat-induced inactivation. Low-potential cytochrome c that plays a role in the OEC of PSII. In Nostoc sp. (strain PCC 7120 / SAG 25.82 / UTEX 2576), this protein is Photosystem II extrinsic protein V.